Consider the following 315-residue polypeptide: Putative protein phosphatase 2C 24 (315 aa).

The PPM-type phosphatase domain maps to 71–314 (ALRMEAASCF…DDITVVVAYI (244 aa)). Positions 102, 103, 238, and 305 each coordinate Mn(2+).

The protein belongs to the PP2C family. The cofactor is Mg(2+). Mn(2+) is required as a cofactor.

The enzyme catalyses O-phospho-L-seryl-[protein] + H2O = L-seryl-[protein] + phosphate. It catalyses the reaction O-phospho-L-threonyl-[protein] + H2O = L-threonyl-[protein] + phosphate. In Oryza sativa subsp. japonica (Rice), this protein is Putative protein phosphatase 2C 24.